The sequence spans 205 residues: Calcium-binding allergen Bet v 3 (205 aa).

Residues methionine 1–asparagine 26 are disordered. 4 EF-hand domains span residues leucine 36–glutamate 71, threonine 72–serine 107, glutamine 130–serine 165, and serine 168–arginine 203. Residues aspartate 49, asparagine 51, aspartate 53, and glutamate 60 each coordinate Ca(2+). Ca(2+)-binding residues include aspartate 143, aspartate 145, aspartate 147, tyrosine 149, glutamate 154, aspartate 181, asparagine 183, aspartate 185, arginine 187, and glutamate 192.

Functionally, could be involved in calcium metabolism in pollen. Binds 3 calcium ions. In Betula pendula (European white birch), this protein is Calcium-binding allergen Bet v 3 (BETVIII).